We begin with the raw amino-acid sequence, 299 residues long: Bifunctional protein FolD (299 aa).

Residues glycine 168–serine 170, serine 193, and isoleucine 234 contribute to the NADP(+) site.

Belongs to the tetrahydrofolate dehydrogenase/cyclohydrolase family. Homodimer.

The catalysed reaction is (6R)-5,10-methylene-5,6,7,8-tetrahydrofolate + NADP(+) = (6R)-5,10-methenyltetrahydrofolate + NADPH. The enzyme catalyses (6R)-5,10-methenyltetrahydrofolate + H2O = (6R)-10-formyltetrahydrofolate + H(+). It participates in one-carbon metabolism; tetrahydrofolate interconversion. Its function is as follows. Catalyzes the oxidation of 5,10-methylenetetrahydrofolate to 5,10-methenyltetrahydrofolate and then the hydrolysis of 5,10-methenyltetrahydrofolate to 10-formyltetrahydrofolate. The chain is Bifunctional protein FolD from Bartonella tribocorum (strain CIP 105476 / IBS 506).